A 2177-amino-acid chain; its full sequence is Mediator of RNA polymerase II transcription subunit 12 (2177 aa).

A disordered region spans residues 12–35 (RPLKRPRLGPPDVYPQDPKQKEDE). K80 carries the post-translational modification N6-acetyllysine. Y166 bears the Phosphotyrosine mark. 4 disordered regions span residues 323-344 (QSTS…TPST), 627-669 (GAPG…MDID), 690-717 (TMPC…PKEK), and 1241-1266 (TVTG…QGGR). 4 positions are modified to phosphoserine: S635, S665, S698, and S700. Basic and acidic residues predominate over residues 702–717 (EKPDVEKEVKPPPKEK). Residues S1258 and S1269 each carry the phosphoserine modification. The span at 1394–1411 (AETGSSSGSTASNMPSSS) shows a compositional bias: low complexity. 3 disordered regions span residues 1394–1415 (AETG…KTKP), 1450–1474 (ELEK…KSMS), and 1738–1829 (YLEP…PGSI). Composition is skewed to basic and acidic residues over residues 1450 to 1469 (ELEK…DRQK) and 1758 to 1771 (EPEK…KTDK). The tract at residues 1616 to 2051 (LAKKLQKELG…VRSTAILPEQ (436 aa)) is interaction with CTNNB1 and GLI3. A compositionally biased stretch (basic residues) spans 1784–1793 (KKSTKGKKRS). At K1798 the chain carries N6-acetyllysine. Residue R1899 is modified to Asymmetric dimethylarginine; alternate. Omega-N-methylarginine; alternate is present on R1899. R1910 is modified (omega-N-methylarginine). Disordered stretches follow at residues 1919 to 1938 (QGML…SYGL) and 1967 to 1989 (SYSS…DPTR). Polar residues predominate over residues 1927–1938 (VHQMTPSSSYGL). A compositionally biased stretch (low complexity) spans 1967–1980 (SYSSQPYQSTHPST). R1994 and R2015 each carry asymmetric dimethylarginine. 3 stretches are compositionally biased toward low complexity: residues 2115–2125 (QHQQQQQQQAA), 2133–2149 (SQPQ…QQQQ), and 2158–2171 (LQQQ…QPST). 2 disordered regions span residues 2115–2149 (QHQQ…QQQQ) and 2158–2177 (LQQQ…FGRY).

The protein belongs to the Mediator complex subunit 12 family. As to quaternary structure, component of the Mediator complex, which is composed of MED1, MED4, MED6, MED7, MED8, MED9, MED10, MED11, MED12, MED13, MED13L, MED14, MED15, MED16, MED17, MED18, MED19, MED20, MED21, MED22, MED23, MED24, MED25, MED26, MED27, MED29, MED30, MED31, CCNC, CDK8 and CDC2L6/CDK11. The MED12, MED13, CCNC and CDK8 subunits form a distinct module termed the CDK8 module. Mediator containing the CDK8 module is less active than Mediator lacking this module in supporting transcriptional activation. Individual preparations of the Mediator complex lacking one or more distinct subunits have been variously termed ARC, CRSP, DRIP, PC2, SMCC and TRAP. Also interacts with CTNNB1 and GLI3. As to expression, ubiquitous.

It localises to the nucleus. Its function is as follows. Component of the Mediator complex, a coactivator involved in the regulated transcription of nearly all RNA polymerase II-dependent genes. Mediator functions as a bridge to convey information from gene-specific regulatory proteins to the basal RNA polymerase II transcription machinery. Mediator is recruited to promoters by direct interactions with regulatory proteins and serves as a scaffold for the assembly of a functional pre-initiation complex with RNA polymerase II and the general transcription factors. This subunit may specifically regulate transcription of targets of the Wnt signaling pathway and SHH signaling pathway. This Homo sapiens (Human) protein is Mediator of RNA polymerase II transcription subunit 12 (MED12).